The sequence spans 315 residues: Small ribosomal subunit biogenesis GTPase RsgA (315 aa).

Residues 79 to 243 (LSKESHILGA…LIDTPGIKGF (165 aa)) form the CP-type G domain. GTP contacts are provided by residues 128–131 (NKID) and 182–190 (GHSGVGKSS). Zn(2+) is bound by residues Cys-267, Cys-272, His-274, and Cys-280.

Belongs to the TRAFAC class YlqF/YawG GTPase family. RsgA subfamily. In terms of assembly, monomer. Associates with 30S ribosomal subunit, binds 16S rRNA. The cofactor is Zn(2+).

It is found in the cytoplasm. In terms of biological role, one of several proteins that assist in the late maturation steps of the functional core of the 30S ribosomal subunit. Helps release RbfA from mature subunits. May play a role in the assembly of ribosomal proteins into the subunit. Circularly permuted GTPase that catalyzes slow GTP hydrolysis, GTPase activity is stimulated by the 30S ribosomal subunit. This is Small ribosomal subunit biogenesis GTPase RsgA from Porphyromonas gingivalis (strain ATCC BAA-308 / W83).